We begin with the raw amino-acid sequence, 199 residues long: Holliday junction branch migration complex subunit RuvA (199 aa).

The tract at residues 1–63 (MIASVRGEVL…EDSMTLYGFT (63 aa)) is domain I. The segment at 64–142 (DAETRDLFLT…AAGAAGAPAG (79 aa)) is domain II. The flexible linker stretch occupies residues 143–153 (AARNGHAVRGP). Residues 153 to 199 (PVVEALVGLGFAAKQAEEATDKVLAAEPEAGTSGALRAALSLLGKSR) are domain III.

Belongs to the RuvA family. As to quaternary structure, homotetramer. Forms an RuvA(8)-RuvB(12)-Holliday junction (HJ) complex. HJ DNA is sandwiched between 2 RuvA tetramers; dsDNA enters through RuvA and exits via RuvB. An RuvB hexamer assembles on each DNA strand where it exits the tetramer. Each RuvB hexamer is contacted by two RuvA subunits (via domain III) on 2 adjacent RuvB subunits; this complex drives branch migration. In the full resolvosome a probable DNA-RuvA(4)-RuvB(12)-RuvC(2) complex forms which resolves the HJ.

It localises to the cytoplasm. In terms of biological role, the RuvA-RuvB-RuvC complex processes Holliday junction (HJ) DNA during genetic recombination and DNA repair, while the RuvA-RuvB complex plays an important role in the rescue of blocked DNA replication forks via replication fork reversal (RFR). RuvA specifically binds to HJ cruciform DNA, conferring on it an open structure. The RuvB hexamer acts as an ATP-dependent pump, pulling dsDNA into and through the RuvAB complex. HJ branch migration allows RuvC to scan DNA until it finds its consensus sequence, where it cleaves and resolves the cruciform DNA. The chain is Holliday junction branch migration complex subunit RuvA from Mycobacterium avium (strain 104).